The chain runs to 275 residues: Elongation factor Ts (275 aa).

Positions 76–79 are involved in Mg(2+) ion dislocation from EF-Tu; the sequence is TDFV.

It belongs to the EF-Ts family.

It localises to the cytoplasm. Associates with the EF-Tu.GDP complex and induces the exchange of GDP to GTP. It remains bound to the aminoacyl-tRNA.EF-Tu.GTP complex up to the GTP hydrolysis stage on the ribosome. This is Elongation factor Ts from Corynebacterium kroppenstedtii (strain DSM 44385 / JCM 11950 / CIP 105744 / CCUG 35717).